A 481-amino-acid polypeptide reads, in one-letter code: RAC-beta serine/threonine-protein kinase (481 aa).

Residue M1 is modified to N-acetylmethionine. One can recognise a PH domain in the interval 5–108 (SVIKEGWLHK…WMRAIQMVAN (104 aa)). Phosphoserine is present on S34. An intrachain disulfide couples C60 to C77. Phosphoserine is present on S126. O-linked (GlcNAc) serine glycosylation is found at S128 and S131. Positions 152–409 (FDYLKLLGKG…AKEVMEHRFF (258 aa)) constitute a Protein kinase domain. ATP is bound by residues 158–166 (LGKGTFGKV) and K181. D275 (proton acceptor) is an active-site residue. 2 residues coordinate Mn(2+): N280 and D293. Cysteines 297 and 311 form a disulfide. T306 carries O-linked (GlcNAc) threonine glycosylation. A Phosphothreonine; by PDPK1 modification is found at T309. A glycan (O-linked (GlcNAc) threonine) is linked at T313. In terms of domain architecture, AGC-kinase C-terminal spans 410–481 (LSINWQDVVQ…QFSYSASIRE (72 aa)). S447 carries the post-translational modification Phosphoserine. A Phosphothreonine modification is found at T451. 2 positions are modified to phosphoserine: S474 and S478. O-linked (GlcNAc) serine; alternate glycosylation is present at S474.

Belongs to the protein kinase superfamily. AGC Ser/Thr protein kinase family. RAC subfamily. In terms of assembly, interacts with BTBD10. Interacts with KCTD20. Interacts (via PH domain) with MTCP1, TCL1A and TCL1B; this interaction may facilitate AKT2 oligomerization and phosphorylation, hence increasing kinase activity. Interacts with PHB2; this interaction may be important for myogenic differentiation. Interacts (when phosphorylated) with CLIP3/ClipR-59; this interaction promotes AKT2 recruitment to the plasma membrane. Interacts with WDFY2/ProF (via WD repeats 1-3). Phosphorylation on Thr-309 and Ser-474 is required for full activity. Phosphorylation of the activation loop at Thr-309 by PDPK1/PDK1 is a prerequisite for full activation. Phosphorylated and activated by PDPK1/PDK1 in the presence of phosphatidylinositol 3,4,5-trisphosphate. Phosphorylation by mTORC2 in response to growth factors plays a key role in AKT1 activation: mTORC2 phosphorylates different sites depending on the context, such as Ser-474 or Ser-478, thereby facilitating subsequent phosphorylation of the activation loop by PDPK1/PDK1. In terms of processing, ubiquitinated; undergoes both 'Lys-48'- and 'Lys-63'-linked polyubiquitination. TRAF6 catalyzes 'Lys-63'-linked AKT2 ubiquitination; this modification may be important for AKT2 recruitment to the plasma membrane and for AKT2 activating phosphorylation. When phosphorylated, undergoes 'Lys-48'-polyubiquitination catalyzed by TTC3 in the nucleus, leading to its degradation by the proteasome. Post-translationally, O-GlcNAcylation at Thr-306 and Thr-313 inhibits activating phosphorylation at Thr-309 via the disruption of the interaction between AKT and PDPK1/PDK1. As to expression, widely expressed. Expressed in myoblasts.

It localises to the cytoplasm. The protein resides in the nucleus. Its subcellular location is the cell membrane. The protein localises to the early endosome. The catalysed reaction is L-seryl-[protein] + ATP = O-phospho-L-seryl-[protein] + ADP + H(+). The enzyme catalyses L-threonyl-[protein] + ATP = O-phospho-L-threonyl-[protein] + ADP + H(+). Phosphorylation at Thr-309 (in the kinase domain) and Ser-474 (in the C-terminal regulatory region) is required for full activation. In adipocytes and hepatocytes, the activation is induced by insulin. Aminofurazans, such as 4-[2-(4-amino-2,5-dihydro-1,2,5-oxadiazol-3-yl)-6-{[(1S)-3-amino-1-phenylpropyl]oxy}-1-ethyl-1H-imidazo[4,5-c]pyridin-4-yl]-2-methylbut-3-yn-2-ol (compound 32), are potent AKT2 inhibitors. AKT2 phosphorylation of PKP1 is induced by insulin. Its function is as follows. Serine/threonine kinase closely related to AKT1 and AKT3. All 3 enzymes, AKT1, AKT2 and AKT3, are collectively known as AKT kinase. AKT regulates many processes including metabolism, proliferation, cell survival, growth and angiogenesis, through the phosphorylation of a range of downstream substrates. Over 100 substrates have been reported so far, although for most of them, the precise AKT kinase catalyzing the reaction was not specified. AKT regulates glucose uptake by mediating insulin-induced translocation of the SLC2A4/GLUT4 glucose transporter to the cell surface. Phosphorylation of PTPN1 at 'Ser-50' negatively modulates its phosphatase activity preventing dephosphorylation of the insulin receptor and the attenuation of insulin signaling. Phosphorylation of TBC1D4 triggers the binding of this effector to inhibitory 14-3-3 proteins, which is required for insulin-stimulated glucose transport. AKT also regulates the storage of glucose in the form of glycogen by phosphorylating GSK3A at 'Ser-21' and GSK3B at 'Ser-9', resulting in inhibition of its kinase activity. Phosphorylation of GSK3 isoforms by AKT is also thought to be one mechanism by which cell proliferation is driven. AKT also regulates cell survival via the phosphorylation of MAP3K5 (apoptosis signal-related kinase). Phosphorylation of 'Ser-83' decreases MAP3K5 kinase activity stimulated by oxidative stress and thereby prevents apoptosis. AKT mediates insulin-stimulated protein synthesis by phosphorylating TSC2 at 'Ser-939' and 'Thr-1462', thereby activating mTORC1 signaling and leading to both phosphorylation of 4E-BP1 and in activation of RPS6KB1. AKT is involved in the phosphorylation of members of the FOXO factors (Forkhead family of transcription factors), leading to binding of 14-3-3 proteins and cytoplasmic localization. In particular, FOXO1 is phosphorylated at 'Thr-24', 'Ser-256' and 'Ser-319'. FOXO3 and FOXO4 are phosphorylated on equivalent sites. AKT has an important role in the regulation of NF-kappa-B-dependent gene transcription and positively regulates the activity of CREB1 (cyclic AMP (cAMP)-response element binding protein). The phosphorylation of CREB1 induces the binding of accessory proteins that are necessary for the transcription of pro-survival genes such as BCL2 and MCL1. AKT phosphorylates 'Ser-454' on ATP citrate lyase (ACLY), thereby potentially regulating ACLY activity and fatty acid synthesis. Activates the 3B isoform of cyclic nucleotide phosphodiesterase (PDE3B) via phosphorylation of 'Ser-273', resulting in reduced cyclic AMP levels and inhibition of lipolysis. Phosphorylates PIKFYVE on 'Ser-318', which results in increased PI(3)P-5 activity. The Rho GTPase-activating protein DLC1 is another substrate and its phosphorylation is implicated in the regulation cell proliferation and cell growth. AKT plays a role as key modulator of the AKT-mTOR signaling pathway controlling the tempo of the process of newborn neurons integration during adult neurogenesis, including correct neuron positioning, dendritic development and synapse formation. Signals downstream of phosphatidylinositol 3-kinase (PI(3)K) to mediate the effects of various growth factors such as platelet-derived growth factor (PDGF), epidermal growth factor (EGF), insulin and insulin-like growth factor 1 (IGF1). AKT mediates the antiapoptotic effects of IGF1. Essential for the SPATA13-mediated regulation of cell migration and adhesion assembly and disassembly. May be involved in the regulation of the placental development. In response to lysophosphatidic acid stimulation, inhibits the ciliogenesis cascade. In this context, phosphorylates WDR44, hence stabilizing its interaction with Rab11 and preventing the formation of the ciliogenic Rab11-FIP3-RAB3IP complex. Also phosphorylates RAB3IP/Rabin8, thus may affect RAB3IP guanine nucleotide exchange factor (GEF) activity toward Rab8, which is important for cilia growth. Phosphorylates PKP1, facilitating its interaction with YWHAG and translocation to the nucleus, ultimately resulting in a reduction in keratinocyte intercellular adhesion. Phosphorylation of PKP1 increases PKP1 protein stability, translocation to the cytoplasm away from desmosome plaques and PKP1-driven cap-dependent translation. Functionally, several AKT2-specific substrates have been identified, including ANKRD2, C2CD5, CLK2 and PITX2. May play a role in myoblast differentiation. In this context, may act through PITX2 phosphorylation. Unphosphorylated PITX2 associates with an ELAVL1/HuR-containing complex, which stabilizes CCND1 cyclin mRNA, ensuring cell proliferation. Phosphorylation by AKT2 impairs this association, leading to CCND1 mRNA destabilization and progression towards differentiation. Also involved in the negative regulation of myogenesis in response to stress conditions. In this context, acts by phosphorylating ANKRD2. May also be a key regulator of glucose uptake. Regulates insulin-stimulated glucose transport by the increase of glucose transporter GLUT4 translocation from intracellular stores to the plasma membrane. In this context, acts by phosphorylating C2CD5/CDP138 on 'Ser-197' in insulin-stimulated adipocytes. Through the phosphorylation of CLK2 on 'Thr-343', involved in insulin-regulated suppression of hepatic gluconeogenesis. The protein is RAC-beta serine/threonine-protein kinase of Homo sapiens (Human).